The following is a 299-amino-acid chain: Tyrosine recombinase XerC (299 aa).

The 87-residue stretch at 2–88 folds into the Core-binding (CB) domain; that stretch reads SALQPLIDTY…ALRSFLDYLV (87 aa). In terms of domain architecture, Tyr recombinase spans 109–289; sequence PLPKNVSVDD…DFQHLSKIYD (181 aa). Active-site residues include arginine 148, lysine 172, histidine 241, arginine 244, and histidine 267. The active-site O-(3'-phospho-DNA)-tyrosine intermediate is the tyrosine 276.

It belongs to the 'phage' integrase family. XerC subfamily. As to quaternary structure, forms a cyclic heterotetrameric complex composed of two molecules of XerC and two molecules of XerD.

It localises to the cytoplasm. Functionally, site-specific tyrosine recombinase, which acts by catalyzing the cutting and rejoining of the recombining DNA molecules. The XerC-XerD complex is essential to convert dimers of the bacterial chromosome into monomers to permit their segregation at cell division. It also contributes to the segregational stability of plasmids. The protein is Tyrosine recombinase XerC of Psychromonas ingrahamii (strain DSM 17664 / CCUG 51855 / 37).